The sequence spans 211 residues: Large ribosomal subunit protein eL13 (211 aa).

Residue Lys-16 is modified to N6-acetyllysine. Phosphoserine occurs at positions 52, 77, and 106. Residues Lys-123 and Lys-145 each participate in a glycyl lysine isopeptide (Lys-Gly) (interchain with G-Cter in SUMO2) cross-link. Residue Lys-174 forms a Glycyl lysine isopeptide (Lys-Gly) (interchain with G-Cter in SUMO1); alternate linkage. Glycyl lysine isopeptide (Lys-Gly) (interchain with G-Cter in SUMO2); alternate cross-links involve residues Lys-174 and Lys-177. An N6-acetyllysine; alternate modification is found at Lys-177.

This sequence belongs to the eukaryotic ribosomal protein eL13 family. As to quaternary structure, component of the large ribosomal subunit.

It localises to the cytoplasm. In terms of biological role, component of the large ribosomal subunit. The ribosome is a large ribonucleoprotein complex responsible for the synthesis of proteins in the cell. The chain is Large ribosomal subunit protein eL13 (Rpl13) from Mus musculus (Mouse).